The primary structure comprises 403 residues: TPR repeat-containing protein Synpcc7942_0270 (403 aa).

5 TPR repeats span residues 208–243 (AYLCSKLGGLLVQEGDLKAAQRWLKQGLKQGRPEPA), 244–282 (VRYELLYHLALLERRQGDLDAAIDRYQAALQEPVDAIHK), 283–316 (LGAWVNLSHLYRDRGQLGLAYDAARQAVAAAPQA), 317–350 (TVALTALGLAARAIGNYPEAIAAYQQALQLDPND), and 351–387 (PSLYQNLGAVLFQVGQLEASYAAFRQAIAGYEQQGSP).

The protein is TPR repeat-containing protein Synpcc7942_0270 of Synechococcus elongatus (strain ATCC 33912 / PCC 7942 / FACHB-805) (Anacystis nidulans R2).